Consider the following 207-residue polypeptide: Ribosomal RNA small subunit methyltransferase G (207 aa).

Residues G73, L78, 124–125 (VE), and R139 each bind S-adenosyl-L-methionine.

This sequence belongs to the methyltransferase superfamily. RNA methyltransferase RsmG family.

The protein localises to the cytoplasm. It carries out the reaction guanosine(527) in 16S rRNA + S-adenosyl-L-methionine = N(7)-methylguanosine(527) in 16S rRNA + S-adenosyl-L-homocysteine. In terms of biological role, specifically methylates the N7 position of guanine in position 527 of 16S rRNA. The polypeptide is Ribosomal RNA small subunit methyltransferase G (Salmonella choleraesuis (strain SC-B67)).